A 180-amino-acid chain; its full sequence is Probable macrolide acetyltransferase (180 aa).

This sequence belongs to the transferase hexapeptide repeat family.

The sequence is that of Probable macrolide acetyltransferase from Lysinibacillus sphaericus (Bacillus sphaericus).